Consider the following 150-residue polypeptide: Large ribosomal subunit protein bL9 (150 aa).

The protein belongs to the bacterial ribosomal protein bL9 family.

Functionally, binds to the 23S rRNA. In Staphylococcus aureus (strain NCTC 8325 / PS 47), this protein is Large ribosomal subunit protein bL9.